Here is a 417-residue protein sequence, read N- to C-terminus: NADH-quinone oxidoreductase subunit D (417 aa).

It belongs to the complex I 49 kDa subunit family. As to quaternary structure, NDH-1 is composed of 14 different subunits. Subunits NuoB, C, D, E, F, and G constitute the peripheral sector of the complex.

Its subcellular location is the cell inner membrane. It carries out the reaction a quinone + NADH + 5 H(+)(in) = a quinol + NAD(+) + 4 H(+)(out). In terms of biological role, NDH-1 shuttles electrons from NADH, via FMN and iron-sulfur (Fe-S) centers, to quinones in the respiratory chain. The immediate electron acceptor for the enzyme in this species is believed to be ubiquinone. Couples the redox reaction to proton translocation (for every two electrons transferred, four hydrogen ions are translocated across the cytoplasmic membrane), and thus conserves the redox energy in a proton gradient. This chain is NADH-quinone oxidoreductase subunit D, found in Coxiella burnetii (strain RSA 331 / Henzerling II).